The primary structure comprises 93 residues: RNA-binding protein Hfq (93 aa).

Positions 9–68 constitute a Sm domain; the sequence is DPYLNALRRERIPVSIYLVNGIKLQGQIESFDQFVILLKNTVSQMVYKHAISTVVPARAI. Positions 70-81 are enriched in low complexity; that stretch reads HNNNSNHAHQAA. The segment at 70–93 is disordered; the sequence is HNNNSNHAHQAAPVQSAEVVEKVE.

This sequence belongs to the Hfq family. As to quaternary structure, homohexamer.

Functionally, RNA chaperone that binds small regulatory RNA (sRNAs) and mRNAs to facilitate mRNA translational regulation in response to envelope stress, environmental stress and changes in metabolite concentrations. Also binds with high specificity to tRNAs. The polypeptide is RNA-binding protein Hfq (Glaesserella parasuis serovar 5 (strain SH0165) (Haemophilus parasuis)).